The chain runs to 425 residues: Adenylosuccinate synthetase (425 aa).

Residues 12-18 (GDEGKGK) and 40-42 (GHT) each bind GTP. D13 (proton acceptor) is an active-site residue. Mg(2+)-binding residues include D13 and G40. IMP contacts are provided by residues 13-16 (DEGK), 38-41 (NAGH), T127, R141, Q222, T237, and R301. The active-site Proton donor is the H41. Residue 297–303 (AVTGRPR) participates in substrate binding. GTP is bound by residues R303, 329–331 (KID), and 411–413 (SVG).

It belongs to the adenylosuccinate synthetase family. Homodimer. The cofactor is Mg(2+).

It localises to the cytoplasm. The catalysed reaction is IMP + L-aspartate + GTP = N(6)-(1,2-dicarboxyethyl)-AMP + GDP + phosphate + 2 H(+). Its pathway is purine metabolism; AMP biosynthesis via de novo pathway; AMP from IMP: step 1/2. Functionally, plays an important role in the de novo pathway of purine nucleotide biosynthesis. Catalyzes the first committed step in the biosynthesis of AMP from IMP. In Fusobacterium nucleatum subsp. nucleatum (strain ATCC 25586 / DSM 15643 / BCRC 10681 / CIP 101130 / JCM 8532 / KCTC 2640 / LMG 13131 / VPI 4355), this protein is Adenylosuccinate synthetase.